A 381-amino-acid polypeptide reads, in one-letter code: MKLTKTFKAFFENEKSGGLLLLFVTVISLWAANSSYSAGYIAFWEKDLAGHSITHWINDGLMTIFFLLIGLELEREIYHGELSNIKNASLPIMAAFGGMLIPAATFLALNFGTSTQNGAGIPMATDIAFAIGILSLLGDKVPASLKVFLTALAVIDDLGAIIVIAVFYTTSIGFVNLAIALGIWVFLFVLNRMKVYNLIPYLIGGVIMWYFMLNSGIHATITGVILAFVIPFGDGGEKSTSYKLQHFLHQPVAFFILPLFAIANTCIAIESNWHIGLNHPNAFGIILGLVIGKPLGILLFSSIGVSAGLCALPKNLKWAHILGAGMLGGIGFTMSIFITLLAFKDPEIIVFSKIAIIIASIISGITGFVYLRYILTTNKNT.

11 consecutive transmembrane segments (helical) span residues 18 to 38, 53 to 73, 89 to 109, 118 to 138, 147 to 167, 170 to 190, 210 to 230, 251 to 271, 283 to 303, 321 to 341, and 348 to 368; these read GLLL…SYSA, ITHW…GLEL, SLPI…FLAL, GAGI…SLLG, VFLT…IAVF, TSIG…LFVL, YFML…AFVI, PVAF…AIES, FGII…FSSI, ILGA…ITLL, and IIVF…ITGF.

Belongs to the NhaA Na(+)/H(+) (TC 2.A.33) antiporter family.

It is found in the cell inner membrane. The catalysed reaction is Na(+)(in) + 2 H(+)(out) = Na(+)(out) + 2 H(+)(in). Functionally, na(+)/H(+) antiporter that extrudes sodium in exchange for external protons. This is Na(+)/H(+) antiporter NhaA 1 from Flavobacterium johnsoniae (strain ATCC 17061 / DSM 2064 / JCM 8514 / BCRC 14874 / CCUG 350202 / NBRC 14942 / NCIMB 11054 / UW101) (Cytophaga johnsonae).